The chain runs to 206 residues: Pyrrolidone-carboxylate peptidase (206 aa).

Residues Glu76, Cys139, and His163 contribute to the active site.

Belongs to the peptidase C15 family. In terms of assembly, homotetramer.

The protein resides in the cytoplasm. It catalyses the reaction Release of an N-terminal pyroglutamyl group from a polypeptide, the second amino acid generally not being Pro.. In terms of biological role, removes 5-oxoproline from various penultimate amino acid residues except L-proline. This Pyrococcus horikoshii (strain ATCC 700860 / DSM 12428 / JCM 9974 / NBRC 100139 / OT-3) protein is Pyrrolidone-carboxylate peptidase (pcp).